The following is a 473-amino-acid chain: Proline--tRNA ligase (473 aa).

It belongs to the class-II aminoacyl-tRNA synthetase family. ProS type 3 subfamily. Homodimer.

It localises to the cytoplasm. It carries out the reaction tRNA(Pro) + L-proline + ATP = L-prolyl-tRNA(Pro) + AMP + diphosphate. Catalyzes the attachment of proline to tRNA(Pro) in a two-step reaction: proline is first activated by ATP to form Pro-AMP and then transferred to the acceptor end of tRNA(Pro). The polypeptide is Proline--tRNA ligase (Mesoplasma florum (strain ATCC 33453 / NBRC 100688 / NCTC 11704 / L1) (Acholeplasma florum)).